A 132-amino-acid polypeptide reads, in one-letter code: Cytochrome c' (132 aa).

Heme c contacts are provided by R10, Q11, D65, C122, C125, and H126.

Binds 1 heme c group covalently per subunit.

Cytochrome c' is the most widely occurring bacterial c-type cytochrome. Cytochromes c' are high-spin proteins and the heme has no sixth ligand. Their exact function is not known. This is Cytochrome c' from Halomonas halodenitrificans (strain ATCC 12084 / NCIMB 8669) (Paracoccus halodenitrificans).